The primary structure comprises 79 residues: Large ribosomal subunit protein uL29 (79 aa).

Belongs to the universal ribosomal protein uL29 family.

This is Large ribosomal subunit protein uL29 from Gluconacetobacter diazotrophicus (strain ATCC 49037 / DSM 5601 / CCUG 37298 / CIP 103539 / LMG 7603 / PAl5).